Consider the following 413-residue polypeptide: Peptidase T (413 aa).

H81 serves as a coordination point for Zn(2+). D83 is an active-site residue. D143 contacts Zn(2+). E178 functions as the Proton acceptor in the catalytic mechanism. Zn(2+) contacts are provided by E179, D201, and H383.

This sequence belongs to the peptidase M20B family. Zn(2+) serves as cofactor.

Its subcellular location is the cytoplasm. It carries out the reaction Release of the N-terminal residue from a tripeptide.. In terms of biological role, cleaves the N-terminal amino acid of tripeptides. In Lactococcus lactis subsp. hordniae, this protein is Peptidase T.